Consider the following 262-residue polypeptide: Acidic leucine-rich nuclear phosphoprotein 32 family member B (262 aa).

4 LRR repeats span residues 16-40 (PGEVKELVLDNCRSDDGKIVGLSSD), 43-64 (NLEFLSMINVNLLSISNLPKLN), 65-87 (KLRKLELSDNRISGGLEVLAERT), and 89-110 (NLTHLNLSGNKIKDINTLEPLK). The LRRCT domain maps to 123–161 (CEVTMLINYRESVFTLLPQLTYLDGFDADEQEAPDSDPE). The span at 150-233 (ADEQEAPDSD…EDEEDDEADD (84 aa)) shows a compositional bias: acidic residues. Positions 150-262 (ADEQEAPDSD…PEDEEDDEDD (113 aa)) are disordered. A Nuclear localization signal motif is present at residues 240-243 (KRKR). Acidic residues predominate over residues 247–262 (DEGEEDPEDEEDDEDD).

Belongs to the ANP32 family. As to quaternary structure, interacts with histones H3 and H4. Interacts with KLF5; this interaction induces promoter region-specific histone incorporation and inhibition of histone acetylation by ANP32B. Post-translationally, directly cleaved by caspase-3/CASP3.

It is found in the nucleus. In terms of biological role, multifunctional protein that is involved in the regulation of many processes including cell proliferation, apoptosis, cell cycle progression or transcription. Regulates the proliferation of neuronal stem cells, differentiation of leukemic cells and progression from G1 to S phase of the cell cycle. As negative regulator of caspase-3-dependent apoptosis, may act as an antagonist of ANP32A in regulating tissue homeostasis. Exhibits histone chaperone properties, able to recruit histones to certain promoters, thus regulating the transcription of specific genes. Also plays an essential role in the nucleocytoplasmic transport of specific mRNAs via the uncommon nuclear mRNA export receptor XPO1/CRM1. In Gallus gallus (Chicken), this protein is Acidic leucine-rich nuclear phosphoprotein 32 family member B (ANP32B).